An 884-amino-acid chain; its full sequence is Alanine--tRNA ligase (884 aa).

Residues His-562, His-566, Cys-674, and His-678 each contribute to the Zn(2+) site.

It belongs to the class-II aminoacyl-tRNA synthetase family. Zn(2+) serves as cofactor.

It is found in the cytoplasm. The enzyme catalyses tRNA(Ala) + L-alanine + ATP = L-alanyl-tRNA(Ala) + AMP + diphosphate. Functionally, catalyzes the attachment of alanine to tRNA(Ala) in a two-step reaction: alanine is first activated by ATP to form Ala-AMP and then transferred to the acceptor end of tRNA(Ala). Also edits incorrectly charged Ser-tRNA(Ala) and Gly-tRNA(Ala) via its editing domain. The protein is Alanine--tRNA ligase of Rhizobium etli (strain ATCC 51251 / DSM 11541 / JCM 21823 / NBRC 15573 / CFN 42).